A 208-amino-acid chain; its full sequence is MEGKFITFEGIDGSGKTSVLKGVIEHLNDKRIDNYIWTREPGGNRISEAIRKIILNVEYTEMDARTEALLYAAARRQHLVDTVLPALNEGKLVLCDRFVDSSVVYQGVARDIGVEPVIKLNEFATENLKPDLTLYYDVEPEISLKRISNNRQNQVDRLDKESMDFYHKVRQAYLSLAESNKERIKVIDASQNLDKVIDDTLSILNNFM.

Residue 10–17 (GIDGSGKT) participates in ATP binding.

This sequence belongs to the thymidylate kinase family.

The catalysed reaction is dTMP + ATP = dTDP + ADP. In terms of biological role, phosphorylation of dTMP to form dTDP in both de novo and salvage pathways of dTTP synthesis. The sequence is that of Thymidylate kinase from Ligilactobacillus salivarius (strain UCC118) (Lactobacillus salivarius).